Here is a 182-residue protein sequence, read N- to C-terminus: Large ribosomal subunit protein uL5 (182 aa).

Belongs to the universal ribosomal protein uL5 family. Part of the 50S ribosomal subunit; part of the 5S rRNA/L5/L18/L25 subcomplex. Contacts the 5S rRNA and the P site tRNA. Forms a bridge to the 30S subunit in the 70S ribosome.

In terms of biological role, this is one of the proteins that bind and probably mediate the attachment of the 5S RNA into the large ribosomal subunit, where it forms part of the central protuberance. In the 70S ribosome it contacts protein S13 of the 30S subunit (bridge B1b), connecting the 2 subunits; this bridge is implicated in subunit movement. Contacts the P site tRNA; the 5S rRNA and some of its associated proteins might help stabilize positioning of ribosome-bound tRNAs. The protein is Large ribosomal subunit protein uL5 of Coxiella burnetii (strain CbuK_Q154) (Coxiella burnetii (strain Q154)).